Consider the following 1488-residue polypeptide: Chromosome partition protein MukB (1488 aa).

Position 34-41 (34-41 (GGNGAGKS)) interacts with ATP. Coiled-coil stretches lie at residues 326 to 418 (LEAD…QYNQ), 444 to 472 (LDTF…QTAH), and 509 to 602 (RHLA…QRAP). The interval 666 to 783 (PGGAEDQRLN…SLPIFGRAAR (118 aa)) is flexible hinge. 3 coiled-coil regions span residues 835–923 (EAEI…AKLE), 977–1116 (EMLS…AKAG), and 1209–1265 (VEAI…LQSV). The disordered stretch occupies residues 1049–1074 (ADSGAEERARQRRDELHAQLSNNRSR). A compositionally biased stretch (basic and acidic residues) spans 1051–1065 (SGAEERARQRRDELH).

It belongs to the SMC family. MukB subfamily. Homodimerization via its hinge domain. Binds to DNA via its C-terminal region. Interacts, and probably forms a ternary complex, with MukE and MukF via its C-terminal region. The complex formation is stimulated by calcium or magnesium. Interacts with tubulin-related protein FtsZ.

The protein localises to the cytoplasm. It is found in the nucleoid. Its function is as follows. Plays a central role in chromosome condensation, segregation and cell cycle progression. Functions as a homodimer, which is essential for chromosome partition. Involved in negative DNA supercoiling in vivo, and by this means organize and compact chromosomes. May achieve or facilitate chromosome segregation by condensation DNA from both sides of a centrally located replisome during cell division. The chain is Chromosome partition protein MukB from Salmonella enteritidis PT4 (strain P125109).